Consider the following 941-residue polypeptide: Isoleucine--tRNA ligase (941 aa).

Residues 59 to 69 (PYANGNIHIGH) carry the 'HIGH' region motif. Glu562 contributes to the L-isoleucyl-5'-AMP binding site. Residues 603–607 (KMSKS) carry the 'KMSKS' region motif. An ATP-binding site is contributed by Lys606. Zn(2+)-binding residues include Cys904, Cys907, Cys924, and Cys927.

Belongs to the class-I aminoacyl-tRNA synthetase family. IleS type 1 subfamily. Monomer. Zn(2+) is required as a cofactor.

It is found in the cytoplasm. The catalysed reaction is tRNA(Ile) + L-isoleucine + ATP = L-isoleucyl-tRNA(Ile) + AMP + diphosphate. In terms of biological role, catalyzes the attachment of isoleucine to tRNA(Ile). As IleRS can inadvertently accommodate and process structurally similar amino acids such as valine, to avoid such errors it has two additional distinct tRNA(Ile)-dependent editing activities. One activity is designated as 'pretransfer' editing and involves the hydrolysis of activated Val-AMP. The other activity is designated 'posttransfer' editing and involves deacylation of mischarged Val-tRNA(Ile). The polypeptide is Isoleucine--tRNA ligase (Haemophilus influenzae (strain PittGG)).